Reading from the N-terminus, the 141-residue chain is Putative pre-16S rRNA nuclease (141 aa).

It belongs to the YqgF nuclease family.

Its subcellular location is the cytoplasm. Its function is as follows. Could be a nuclease involved in processing of the 5'-end of pre-16S rRNA. The sequence is that of Putative pre-16S rRNA nuclease from Coxiella burnetii (strain RSA 331 / Henzerling II).